Here is a 1386-residue protein sequence, read N- to C-terminus: Lysophospholipase NTE1 (1386 aa).

Residues M1–T19 are Cytoplasmic-facing. A helical transmembrane segment spans residues T20–F40. At K41–N65 the chain is on the lumenal side. Residues L66–I86 form a helical membrane-spanning segment. Residues R87 to I1386 are Cytoplasmic-facing. Residues E394–T416 form a disordered region. Positions K402–Q411 are enriched in basic residues. A nucleoside 3',5'-cyclic phosphate contacts are provided by residues K577–L701 and K697–K821. The region spanning L1081–K1245 is the PNPLA domain. The GXGXXG motif lies at G1085 to G1090. A GXSXG motif is present at residues G1112–G1116. S1114 (nucleophile) is an active-site residue. D1232 (proton acceptor) is an active-site residue. The short motif at D1232–G1234 is the DGA/G element.

It belongs to the NTE family.

It is found in the endoplasmic reticulum membrane. It catalyses the reaction a 1-acyl-sn-glycero-3-phosphocholine + H2O = sn-glycerol 3-phosphocholine + a fatty acid + H(+). With respect to regulation, inhibited by organophosphorus esters. In terms of biological role, intracellular phospholipase B that catalyzes the double deacylation of phosphatidylcholine (PC) to glycerophosphocholine (GroPCho). Plays an important role in membrane lipid homeostasis. Responsible for the rapid PC turnover in response to inositol, elevated temperatures, or when choline is present in the growth medium. This Candida albicans (strain SC5314 / ATCC MYA-2876) (Yeast) protein is Lysophospholipase NTE1 (NTE1).